The primary structure comprises 456 residues: Bifunctional protein GlmU (456 aa).

Residues 1–229 (MLNNAMSVVI…LSEVEGVNNR (229 aa)) form a pyrophosphorylase region. UDP-N-acetyl-alpha-D-glucosamine contacts are provided by residues 11–14 (LAAG), Lys25, Gln76, 81–82 (GT), 103–105 (YGD), Gly140, Glu154, Asn169, and Asn227. A Mg(2+)-binding site is contributed by Asp105. Asn227 provides a ligand contact to Mg(2+). The segment at 230 to 250 (LQLSRLERVYQSEQAEKLLLA) is linker. The interval 251-456 (GVMLRDPARF…EGWRRPVKKK (206 aa)) is N-acetyltransferase. Residues Arg333 and Lys351 each coordinate UDP-N-acetyl-alpha-D-glucosamine. His363 functions as the Proton acceptor in the catalytic mechanism. UDP-N-acetyl-alpha-D-glucosamine is bound by residues Tyr366 and Asn377. Residues Ala380, 386–387 (NY), Ser405, Ala423, and Arg440 contribute to the acetyl-CoA site.

In the N-terminal section; belongs to the N-acetylglucosamine-1-phosphate uridyltransferase family. It in the C-terminal section; belongs to the transferase hexapeptide repeat family. In terms of assembly, homotrimer. It depends on Mg(2+) as a cofactor.

The protein localises to the cytoplasm. It catalyses the reaction alpha-D-glucosamine 1-phosphate + acetyl-CoA = N-acetyl-alpha-D-glucosamine 1-phosphate + CoA + H(+). The catalysed reaction is N-acetyl-alpha-D-glucosamine 1-phosphate + UTP + H(+) = UDP-N-acetyl-alpha-D-glucosamine + diphosphate. The protein operates within nucleotide-sugar biosynthesis; UDP-N-acetyl-alpha-D-glucosamine biosynthesis; N-acetyl-alpha-D-glucosamine 1-phosphate from alpha-D-glucosamine 6-phosphate (route II): step 2/2. Its pathway is nucleotide-sugar biosynthesis; UDP-N-acetyl-alpha-D-glucosamine biosynthesis; UDP-N-acetyl-alpha-D-glucosamine from N-acetyl-alpha-D-glucosamine 1-phosphate: step 1/1. It participates in bacterial outer membrane biogenesis; LPS lipid A biosynthesis. Functionally, catalyzes the last two sequential reactions in the de novo biosynthetic pathway for UDP-N-acetylglucosamine (UDP-GlcNAc). The C-terminal domain catalyzes the transfer of acetyl group from acetyl coenzyme A to glucosamine-1-phosphate (GlcN-1-P) to produce N-acetylglucosamine-1-phosphate (GlcNAc-1-P), which is converted into UDP-GlcNAc by the transfer of uridine 5-monophosphate (from uridine 5-triphosphate), a reaction catalyzed by the N-terminal domain. The chain is Bifunctional protein GlmU from Shigella boydii serotype 18 (strain CDC 3083-94 / BS512).